The sequence spans 150 residues: Single-stranded DNA-binding protein (150 aa).

The SSB domain occupies Met1–Asp100. Residues Phe129–Asp139 show a composition bias toward low complexity. The disordered stretch occupies residues Phe129–Phe150. Over residues Thr141–Phe150 the composition is skewed to acidic residues.

Homotetramer.

The polypeptide is Single-stranded DNA-binding protein (ssb) (Clostridium perfringens (strain 13 / Type A)).